A 186-amino-acid chain; its full sequence is Mating-type-like protein ALPHA2 (186 aa).

The segment at residues 108–170 (ASYRGHRFTR…NRRRKQKSIY (63 aa)) is a DNA-binding region (homeobox; TALE-type).

It belongs to the TALE/M-ATYP homeobox family.

Its subcellular location is the nucleus. Its function is as follows. Mating type proteins are sequence specific DNA-binding proteins that act as master switches in yeast differentiation by controlling gene expression in a cell type-specific fashion. This is Mating-type-like protein ALPHA2 (MTL1ALPHA2) from Candida glabrata (strain ATCC 2001 / BCRC 20586 / JCM 3761 / NBRC 0622 / NRRL Y-65 / CBS 138) (Yeast).